The chain runs to 382 residues: Succinate--CoA ligase [ADP-forming] subunit beta (382 aa).

Residues 9–240 enclose the ATP-grasp domain; that stretch reads KELLKKYGLP…ITQIDPLEVE (232 aa). Positions 46, 98, 101, and 106 each coordinate ATP. Mg(2+) is bound by residues N195 and D209. Residues N260 and 317–319 each bind substrate; that span reads GIL.

It belongs to the succinate/malate CoA ligase beta subunit family. Heterotetramer of two alpha and two beta subunits. The cofactor is Mg(2+).

The enzyme catalyses succinate + ATP + CoA = succinyl-CoA + ADP + phosphate. It catalyses the reaction GTP + succinate + CoA = succinyl-CoA + GDP + phosphate. It functions in the pathway carbohydrate metabolism; tricarboxylic acid cycle; succinate from succinyl-CoA (ligase route): step 1/1. In terms of biological role, succinyl-CoA synthetase functions in the citric acid cycle (TCA), coupling the hydrolysis of succinyl-CoA to the synthesis of either ATP or GTP and thus represents the only step of substrate-level phosphorylation in the TCA. The beta subunit provides nucleotide specificity of the enzyme and binds the substrate succinate, while the binding sites for coenzyme A and phosphate are found in the alpha subunit. This Hydrogenobaculum sp. (strain Y04AAS1) protein is Succinate--CoA ligase [ADP-forming] subunit beta.